The sequence spans 322 residues: Sideroflexin-2 (322 aa).

Position 1 is an N-acetylmethionine (M1). Transmembrane regions (helical) follow at residues 100 to 122, 142 to 164, 174 to 192, 228 to 250, and 265 to 287; these read MIIT…WQWV, SVRQ…AVGM, LVGR…CVNI, VVIS…MERL, and PLQV…GLFP.

Belongs to the sideroflexin family. In terms of tissue distribution, widely expressed, highest levels in kidney, liver, and pancreas.

The protein resides in the mitochondrion inner membrane. Its subcellular location is the mitochondrion outer membrane. The enzyme catalyses L-serine(in) = L-serine(out). Functionally, mitochondrial amino-acid transporter that mediates transport of serine into mitochondria. Involved in mitochondrial iron homeostasis by regulating heme biosynthesis. In Homo sapiens (Human), this protein is Sideroflexin-2.